The sequence spans 62 residues: UPF0337 protein mll8179 (62 aa).

Residues 1–42 (MRNMVNKDQVAGLAKQLKGSVKQAAGKATGNRRTQAEGMADK) form a disordered region.

The protein belongs to the UPF0337 (CsbD) family.

The chain is UPF0337 protein mll8179 from Mesorhizobium japonicum (strain LMG 29417 / CECT 9101 / MAFF 303099) (Mesorhizobium loti (strain MAFF 303099)).